The primary structure comprises 88 residues: Small ribosomal subunit protein uS15 (88 aa).

The protein belongs to the universal ribosomal protein uS15 family. Part of the 30S ribosomal subunit. Forms a bridge to the 50S subunit in the 70S ribosome, contacting the 23S rRNA.

One of the primary rRNA binding proteins, it binds directly to 16S rRNA where it helps nucleate assembly of the platform of the 30S subunit by binding and bridging several RNA helices of the 16S rRNA. Functionally, forms an intersubunit bridge (bridge B4) with the 23S rRNA of the 50S subunit in the ribosome. The chain is Small ribosomal subunit protein uS15 from Flavobacterium johnsoniae (strain ATCC 17061 / DSM 2064 / JCM 8514 / BCRC 14874 / CCUG 350202 / NBRC 14942 / NCIMB 11054 / UW101) (Cytophaga johnsonae).